The sequence spans 491 residues: Acetylcholine receptor subunit epsilon (491 aa).

An N-terminal signal peptide occupies residues 1–20; the sequence is MAGALLCALLLLQLLGRGEG. The Extracellular portion of the chain corresponds to 21–239; it reads KNEELRLYHY…VIYSLIIRRK (219 aa). N86 and N161 each carry an N-linked (GlcNAc...) asparagine glycan. C148 and C162 form a disulfide bridge. A helical transmembrane segment spans residues 240–264; sequence PLFYVINIIVPCVLISGLVLLAYFL. At 265 to 272 the chain is on the cytoplasmic side; sequence PAQAGGQK. The helical transmembrane segment at 273-291 threads the bilayer; the sequence is CTVSINVLLAQTVFLFLIA. The Extracellular segment spans residues 292–306; that stretch reads QKTPETSLSVPLLGR. A helical membrane pass occupies residues 307-328; it reads YLIFVMVVATLIVMNCVIVLNV. The Cytoplasmic segment spans residues 329-456; that stretch reads SLRTPTTHAM…WVRMGKALDS (128 aa). The chain crosses the membrane as a helical span at residues 457-480; it reads ICFWAALVLFLVGSSLIFLGAYFN. The Extracellular portion of the chain corresponds to 481–491; the sequence is RVPQLPYPPCM.

The protein belongs to the ligand-gated ion channel (TC 1.A.9) family. Acetylcholine receptor (TC 1.A.9.1) subfamily. Epsilon/CHRNE sub-subfamily.

The protein localises to the postsynaptic cell membrane. Its subcellular location is the cell membrane. The catalysed reaction is K(+)(in) = K(+)(out). It carries out the reaction Na(+)(in) = Na(+)(out). In terms of biological role, after binding acetylcholine, the AChR responds by an extensive change in conformation that affects all subunits and leads to opening of an ion-conducting channel across the plasma membrane. This Bos taurus (Bovine) protein is Acetylcholine receptor subunit epsilon (CHRNE).